The sequence spans 686 residues: DNA ligase 2 (686 aa).

Residues 37-41 (DDEYD), 86-87 (SL), and glutamate 121 each bind NAD(+). Lysine 123 acts as the N6-AMP-lysine intermediate in catalysis. Arginine 144, glutamate 179, lysine 295, and lysine 319 together coordinate NAD(+). Positions 413, 416, 431, and 436 each coordinate Zn(2+). Positions 593–681 (VRGEQLAGLN…GVQLPGVQAS (89 aa)) constitute a BRCT domain.

Belongs to the NAD-dependent DNA ligase family. LigA subfamily. Mg(2+) is required as a cofactor. The cofactor is Mn(2+).

The enzyme catalyses NAD(+) + (deoxyribonucleotide)n-3'-hydroxyl + 5'-phospho-(deoxyribonucleotide)m = (deoxyribonucleotide)n+m + AMP + beta-nicotinamide D-nucleotide.. In terms of biological role, DNA ligase that catalyzes the formation of phosphodiester linkages between 5'-phosphoryl and 3'-hydroxyl groups in double-stranded DNA using NAD as a coenzyme and as the energy source for the reaction. It is essential for DNA replication and repair of damaged DNA. The chain is DNA ligase 2 from Deinococcus deserti (strain DSM 17065 / CIP 109153 / LMG 22923 / VCD115).